Consider the following 229-residue polypeptide: Protein-lysine N-methyltransferase EFM4 (229 aa).

Belongs to the class I-like SAM-binding methyltransferase superfamily. EFM4 family.

Its subcellular location is the cytoplasm. The catalysed reaction is L-lysyl-[protein] + S-adenosyl-L-methionine = N(6)-methyl-L-lysyl-[protein] + S-adenosyl-L-homocysteine + H(+). It carries out the reaction N(6)-methyl-L-lysyl-[protein] + S-adenosyl-L-methionine = N(6),N(6)-dimethyl-L-lysyl-[protein] + S-adenosyl-L-homocysteine + H(+). In terms of biological role, S-adenosyl-L-methionine-dependent protein-lysine N-methyltransferase that mono- and dimethylates elongation factor 1-alpha (TEF1 and TEF2) at 'Lys-316'. May play a role in intracellular transport. This Saccharomyces cerevisiae (strain ATCC 204508 / S288c) (Baker's yeast) protein is Protein-lysine N-methyltransferase EFM4.